Reading from the N-terminus, the 298-residue chain is Tyrosine recombinase XerC (298 aa).

In terms of domain architecture, Core-binding (CB) spans 2-88 (TDLHTDVERY…ALRSFFDWLV (87 aa)). In terms of domain architecture, Tyr recombinase spans 109–288 (HLPKNIDVDD…DFQHLASVYD (180 aa)). Residues Arg-148, Lys-172, His-240, Arg-243, and His-266 contribute to the active site. Tyr-275 serves as the catalytic O-(3'-phospho-DNA)-tyrosine intermediate.

Belongs to the 'phage' integrase family. XerC subfamily. In terms of assembly, forms a cyclic heterotetrameric complex composed of two molecules of XerC and two molecules of XerD, in which XerC interacts with XerD via its C-terminal region, XerD interacts with XerC via its C-terminal region and so on.

Its subcellular location is the cytoplasm. Its activity is regulated as follows. FtsK may regulate the catalytic switch between XerC and XerD in the heterotetrameric complex during the two steps of the recombination process. Its function is as follows. Site-specific tyrosine recombinase, which acts by catalyzing the cutting and rejoining of the recombining DNA molecules. Binds cooperatively to specific DNA consensus sequences that are separated from XerD binding sites by a short central region, forming the heterotetrameric XerC-XerD complex that recombines DNA substrates. The complex is essential to convert dimers of the bacterial chromosome into monomers to permit their segregation at cell division. It also contributes to the segregational stability of plasmids. In the complex XerC specifically exchanges the top DNA strands. The sequence is that of Tyrosine recombinase XerC from Escherichia coli O157:H7.